The sequence spans 612 residues: Dihydroxy-acid dehydratase (612 aa).

Residue D81 participates in Mg(2+) binding. C122 serves as a coordination point for [2Fe-2S] cluster. 2 residues coordinate Mg(2+): D123 and K124. Position 124 is an N6-carboxylysine (K124). C193 provides a ligand contact to [2Fe-2S] cluster. Residue E489 coordinates Mg(2+). The active-site Proton acceptor is the S515.

It belongs to the IlvD/Edd family. In terms of assembly, homodimer. The cofactor is [2Fe-2S] cluster. Mg(2+) serves as cofactor.

It catalyses the reaction (2R)-2,3-dihydroxy-3-methylbutanoate = 3-methyl-2-oxobutanoate + H2O. It carries out the reaction (2R,3R)-2,3-dihydroxy-3-methylpentanoate = (S)-3-methyl-2-oxopentanoate + H2O. It participates in amino-acid biosynthesis; L-isoleucine biosynthesis; L-isoleucine from 2-oxobutanoate: step 3/4. The protein operates within amino-acid biosynthesis; L-valine biosynthesis; L-valine from pyruvate: step 3/4. Functionally, functions in the biosynthesis of branched-chain amino acids. Catalyzes the dehydration of (2R,3R)-2,3-dihydroxy-3-methylpentanoate (2,3-dihydroxy-3-methylvalerate) into 2-oxo-3-methylpentanoate (2-oxo-3-methylvalerate) and of (2R)-2,3-dihydroxy-3-methylbutanoate (2,3-dihydroxyisovalerate) into 2-oxo-3-methylbutanoate (2-oxoisovalerate), the penultimate precursor to L-isoleucine and L-valine, respectively. The protein is Dihydroxy-acid dehydratase of Stenotrophomonas maltophilia (strain R551-3).